A 119-amino-acid chain; its full sequence is Putative ankyrin repeat domain-containing protein 26-like 1 (119 aa).

Positions 15-112 (EKEEDLLHKN…EKQSRQRLTK (98 aa)) form a coiled coil.

This Homo sapiens (Human) protein is Putative ankyrin repeat domain-containing protein 26-like 1 (ANKRD36BP1).